Here is a 104-residue protein sequence, read N- to C-terminus: Urease subunit beta (104 aa).

The protein belongs to the urease beta subunit family. As to quaternary structure, heterotrimer of UreA (gamma), UreB (beta) and UreC (alpha) subunits. Three heterotrimers associate to form the active enzyme.

It is found in the cytoplasm. The enzyme catalyses urea + 2 H2O + H(+) = hydrogencarbonate + 2 NH4(+). The protein operates within nitrogen metabolism; urea degradation; CO(2) and NH(3) from urea (urease route): step 1/1. The chain is Urease subunit beta from Rhodopseudomonas palustris (strain BisB5).